Here is a 1136-residue protein sequence, read N- to C-terminus: MSASPPISAGDYLSAPEPDALKPAGPTPSQSRFQVDLVTESAGDGETTVGFDSSPPEYVAEPPPDGLRDSVSGGEEAKGRFRVVNFAASSPDAAPAETAQNGDTVMSEGSLHSSTGGQQHHHYDTHTNTYYLRTFGHNTIDAVPKIDFYRQTAAPLGEKLIRPTLSELHDELDKEPFEDGFANGEELTPAEESAAKDVSESKGVVKFGWIKGVLVRCMLNIWGVMLFIRMTWIVGQAGIAYSCIIVIMATVVTTITGCSTSAIATNGFVRGGGAYYLISRSLGPEFGGSIGLIFAFANAVAVAMYVVGFAETVVELLMDSGLLMIDQTNDIRVIGTITVILLLGISVAGMEWEAKAQIFLLVILITAIFNYFIGSFIAVDSKKKFGFFSYDAGILAENFGPDFRGQTFFSVFSIFFPAATGILAGANISGDLADPQMAIPKGTLLAILITGLVYVGVAISAGACIVRDATGIESNFTLISNCTDAACKYGYDFSSCRPTVEGEVSSCKFGLHNDFQVMSVVSGFSPLISAGIFSATLSSALASLVSAPKVFQALCKDNIYPGIAIFGKGYGKNNEPLRGYFLTFGIALAFILIAELNVIAPIISNFFLASYALINFSVFHASLANSPGWRPSFKYYNMWASLAGAILCCVVMFIINWWAALLTNVIVLSLYIYVSYKKPDVNWGSSTQALTYHQALTHSLQLCGVADHIKTFRPQCLVMTGAPNSRPAILHLVHAFTKNVGLMLCGHVRISSRRPNFKELNSDMLRYQRWLLNNNSKAFYTCVVAEDLRQGTQYMLQAAGLGRLRPNTLVIGFKNDWRTGDIKEVETYINLIHDAFDFQYGVVILRLREGLDISHIQGQDDSSGMKDVVVSVDISKDSDGDSSKPSSKATSVQNSPAVQKDEDDDGKAHTQPLLKKDKKSPTVPLNVADQRLLDASQQFQQKQGKGTVDVWWLFDDGGLTLLIPYLIANKKKWKDCKIRVFIGGKINRIDHDRRAMATLLSKFRIDFSDITVLGDINTKPKSEGLTEFAEMIEPYKLREDDMEQEAAEKLKSEEPWRITDNELELYKAKGNRQIRLNELLKEHSSTANLIVMSMPLARKGAVSSALYMAWLDTLSKDLPPILLVRGNHQSVLTFYS.

Disordered regions lie at residues 1-73 and 91-121; these read MSAS…SVSG and PDAA…QQHH. Residues 1-208 lie on the Cytoplasmic side of the membrane; that stretch reads MSASPPISAG…SESKGVVKFG (208 aa). Thr-125, Thr-129, Thr-134, Thr-139, and Thr-152 each carry phosphothreonine. Residues 209-234 traverse the membrane as a discontinuously helical segment; sequence WIKGVLVRCMLNIWGVMLFIRMTWIV. Position 219 (Leu-219) interacts with Na(+). K(+) contacts are provided by Asn-220 and Ile-221. Residue Trp-222 participates in Na(+) binding. Positions 223, 224, and 225 each coordinate chloride. The Extracellular portion of the chain corresponds to 235–238; it reads GQAG. Residues 239–261 traverse the membrane as a helical segment; that stretch reads IAYSCIIVIMATVVTTITGCSTS. The Cytoplasmic segment spans residues 262–285; sequence AIATNGFVRGGGAYYLISRSLGPE. Residues 286–314 form a helical membrane-spanning segment; that stretch reads FGGSIGLIFAFANAVAVAMYVVGFAETVV. Residue Phe-294 participates in chloride binding. K(+) is bound at residue Tyr-305. The Extracellular segment spans residues 315–327; it reads ELLMDSGLLMIDQ. Transmembrane regions (helical) follow at residues 328-351 and 352-376; these read TNDI…AGME and WEAK…IGSF. Residues 377 to 407 lie on the Extracellular side of the membrane; that stretch reads IAVDSKKKFGFFSYDAGILAENFGPDFRGQT. The discontinuously helical transmembrane segment at 408–427 threads the bilayer; the sequence is FFSVFSIFFPAATGILAGAN. Pro-417, Ala-418, and Thr-420 together coordinate K(+). Chloride-binding residues include Pro-417 and Ala-418. The chloride site is built by Gly-421 and Ile-422. The Cytoplasmic segment spans residues 428 to 438; sequence ISGDLADPQMA. A helical membrane pass occupies residues 439-462; sequence IPKGTLLAILITGLVYVGVAISAG. At 463–523 the chain is on the extracellular side; that stretch reads ACIVRDATGI…DFQVMSVVSG (61 aa). Asn-475 and Asn-481 each carry an N-linked (GlcNAc...) asparagine glycan. Cys-496 and Cys-507 are joined by a disulfide. A helical transmembrane segment spans residues 524 to 551; that stretch reads FSPLISAGIFSATLSSALASLVSAPKVF. Na(+) is bound by residues Ala-535, Ser-538, and Ser-539. Over 552–576 the chain is Cytoplasmic; it reads QALCKDNIYPGIAIFGKGYGKNNEP. 2 consecutive transmembrane segments (helical) span residues 577-595 and 596-619; these read LRGY…LIAE and LNVI…FSVF. Phe-607 and Tyr-611 together coordinate chloride. The Cytoplasmic portion of the chain corresponds to 620 to 636; it reads HASLANSPGWRPSFKYY. 2 helical membrane passes run 637 to 656 and 657 to 672; these read NMWA…FIIN and WWAA…SLYI. Residues 673 to 1136 are Cytoplasmic-facing; sequence YVSYKKPDVN…NHQSVLTFYS (464 aa). The scissor helix stretch occupies residues 689–702; sequence ALTYHQALTHSLQL. The interval 875-921 is disordered; that stretch reads SKDSDGDSSKPSSKATSVQNSPAVQKDEDDDGKAHTQPLLKKDKKSP. Residue Thr-1059 is modified to Phosphothreonine.

Belongs to the SLC12A transporter family. Homodimer; adopts a domain-swap conformation at the scissor helices connecting the transmembrane domain and C-terminal domain. In terms of processing, phosphorylated at Thr-125, Thr-129 and Thr-134 by OXSR1/OSR1 and STK39/SPAK downstream of WNK kinases (WNK1, WNK2, WNK3 or WNK4), promoting its activity.

Its subcellular location is the basolateral cell membrane. It catalyses the reaction K(+)(out) + 2 chloride(out) + Na(+)(out) = K(+)(in) + 2 chloride(in) + Na(+)(in). Its activity is regulated as follows. Activated following phosphorylation by OXSR1/OSR1 and STK39/SPAK. Inhibited by bumetanide. Functionally, cation-chloride cotransporter which mediates the electroneutral transport of chloride, potassium and/or sodium ions across the membrane. Plays a vital role in the regulation of ionic balance and cell volume. Important for maintenance of endolymph volume in the otic vesicle, probably by regulating ion homeostasis. Also plays a role in normal development of the swim bladder. This Danio rerio (Zebrafish) protein is Solute carrier family 12 member 2.